The primary structure comprises 656 residues: Translation factor GUF1, mitochondrial (656 aa).

The transit peptide at 1-28 directs the protein to the mitochondrion; the sequence is MWKGLLQSTRAAWRGPCVRAPRLPFFRR. A tr-type G domain is found at 55-235; the sequence is ERYRNFSIVA…NVIENIPGPD (181 aa). Residues 64–71, 128–132, and 182–185 contribute to the GTP site; these read AHVDHGKS, DTPGH, and NKID.

This sequence belongs to the TRAFAC class translation factor GTPase superfamily. Classic translation factor GTPase family. LepA subfamily.

It localises to the mitochondrion inner membrane. It catalyses the reaction GTP + H2O = GDP + phosphate + H(+). Functionally, promotes mitochondrial protein synthesis. May act as a fidelity factor of the translation reaction, by catalyzing a one-codon backward translocation of tRNAs on improperly translocated ribosomes. Binds to mitochondrial ribosomes in a GTP-dependent manner. The polypeptide is Translation factor GUF1, mitochondrial (Yarrowia lipolytica (strain CLIB 122 / E 150) (Yeast)).